Reading from the N-terminus, the 472-residue chain is 6-phosphogluconate dehydrogenase, decarboxylating (472 aa).

NADP(+) contacts are provided by residues 10–15, 33–35, 74–76, and N102; these read GMAVMG, NRT, and VQA. Residues N102 and 128-130 contribute to the substrate site; that span reads SGG. Catalysis depends on K184, which acts as the Proton acceptor. 187-188 lines the substrate pocket; it reads HN. E191 functions as the Proton donor in the catalytic mechanism. Y192, K262, R289, R447, and H453 together coordinate substrate.

The protein belongs to the 6-phosphogluconate dehydrogenase family. In terms of assembly, homodimer.

It catalyses the reaction 6-phospho-D-gluconate + NADP(+) = D-ribulose 5-phosphate + CO2 + NADPH. The protein operates within carbohydrate degradation; pentose phosphate pathway; D-ribulose 5-phosphate from D-glucose 6-phosphate (oxidative stage): step 3/3. Its function is as follows. Catalyzes the oxidative decarboxylation of 6-phosphogluconate to ribulose 5-phosphate and CO(2), with concomitant reduction of NADP to NADPH. The protein is 6-phosphogluconate dehydrogenase, decarboxylating (gnd) of Lactococcus lactis subsp. lactis (strain IL1403) (Streptococcus lactis).